The primary structure comprises 509 residues: tRNA-2-methylthio-N(6)-dimethylallyladenosine synthase (509 aa).

Residues 1 to 21 (MNEKQKLESGQVHPSDKKSEK) are disordered. One can recognise an MTTase N-terminal domain in the interval 66–184 (RKFYIRTYGC…LPELLSEAYL (119 aa)). 6 residues coordinate [4Fe-4S] cluster: C75, C111, C145, C221, C225, and C228. One can recognise a Radical SAM core domain in the interval 207-437 (RNGKIKGWVN…NALVNEISAK (231 aa)). Positions 440 to 503 (KEYEGKVVEV…TWSLDGEMVG (64 aa)) constitute a TRAM domain.

The protein belongs to the methylthiotransferase family. MiaB subfamily. As to quaternary structure, monomer. The cofactor is [4Fe-4S] cluster.

It is found in the cytoplasm. The catalysed reaction is N(6)-dimethylallyladenosine(37) in tRNA + (sulfur carrier)-SH + AH2 + 2 S-adenosyl-L-methionine = 2-methylsulfanyl-N(6)-dimethylallyladenosine(37) in tRNA + (sulfur carrier)-H + 5'-deoxyadenosine + L-methionine + A + S-adenosyl-L-homocysteine + 2 H(+). The enzyme catalyses N(6)-dimethylallyladenosine(37) in tRNA + (sulfur carrier)-SH + AH2 + S-adenosyl-L-methionine = 2-thio-N(6)-dimethylallyladenosine(37) in tRNA + (sulfur carrier)-H + 5'-deoxyadenosine + L-methionine + A + H(+). It catalyses the reaction 2-thio-N(6)-dimethylallyladenosine(37) in tRNA + S-adenosyl-L-methionine = 2-methylsulfanyl-N(6)-dimethylallyladenosine(37) in tRNA + S-adenosyl-L-homocysteine + H(+). Catalyzes the methylthiolation of N6-(dimethylallyl)adenosine (i(6)A), leading to the formation of 2-methylthio-N6-(dimethylallyl)adenosine (ms(2)i(6)A) at position 37 in tRNAs that read codons beginning with uridine. This is tRNA-2-methylthio-N(6)-dimethylallyladenosine synthase from Bacillus subtilis (strain 168).